The sequence spans 20 residues: Cytochrome c oxidase subunit 6A2, mitochondrial (20 aa).

The segment at 1–20 (ASGAKGDHGGAGASTXXLLT) is disordered.

It belongs to the cytochrome c oxidase subunit 6A family. Component of the cytochrome c oxidase (complex IV, CIV), a multisubunit enzyme composed of 14 subunits. The complex is composed of a catalytic core of 3 subunits MT-CO1, MT-CO2 and MT-CO3, encoded in the mitochondrial DNA, and 11 supernumerary subunits COX4I, COX5A, COX5B, COX6A, COX6B, COX6C, COX7A, COX7B, COX7C, COX8 and NDUFA4, which are encoded in the nuclear genome. The complex exists as a monomer or a dimer and forms supercomplexes (SCs) in the inner mitochondrial membrane with NADH-ubiquinone oxidoreductase (complex I, CI) and ubiquinol-cytochrome c oxidoreductase (cytochrome b-c1 complex, complex III, CIII), resulting in different assemblies (supercomplex SCI(1)III(2)IV(1) and megacomplex MCI(2)III(2)IV(2)). As to expression, heart specific isoform.

The protein localises to the mitochondrion inner membrane. The protein operates within energy metabolism; oxidative phosphorylation. Its function is as follows. Component of the cytochrome c oxidase, the last enzyme in the mitochondrial electron transport chain which drives oxidative phosphorylation. The respiratory chain contains 3 multisubunit complexes succinate dehydrogenase (complex II, CII), ubiquinol-cytochrome c oxidoreductase (cytochrome b-c1 complex, complex III, CIII) and cytochrome c oxidase (complex IV, CIV), that cooperate to transfer electrons derived from NADH and succinate to molecular oxygen, creating an electrochemical gradient over the inner membrane that drives transmembrane transport and the ATP synthase. Cytochrome c oxidase is the component of the respiratory chain that catalyzes the reduction of oxygen to water. Electrons originating from reduced cytochrome c in the intermembrane space (IMS) are transferred via the dinuclear copper A center (CU(A)) of subunit 2 and heme A of subunit 1 to the active site in subunit 1, a binuclear center (BNC) formed by heme A3 and copper B (CU(B)). The BNC reduces molecular oxygen to 2 water molecules unsing 4 electrons from cytochrome c in the IMS and 4 protons from the mitochondrial matrix. Plays a role in the assembly and stabilization of complex IV. In Canis lupus familiaris (Dog), this protein is Cytochrome c oxidase subunit 6A2, mitochondrial (COX6A2).